The chain runs to 216 residues: ATP-dependent dethiobiotin synthetase BioD (216 aa).

12–17 (NVGKTF) lines the ATP pocket. Thr16 contacts Mg(2+). Lys36 is a catalytic residue. Ser40 is a binding site for substrate. ATP-binding positions include Asp53, 110–113 (EGAG), and 170–171 (NQ). Asp53 and Glu110 together coordinate Mg(2+).

This sequence belongs to the dethiobiotin synthetase family. As to quaternary structure, homodimer. The cofactor is Mg(2+).

Its subcellular location is the cytoplasm. The enzyme catalyses (7R,8S)-7,8-diammoniononanoate + CO2 + ATP = (4R,5S)-dethiobiotin + ADP + phosphate + 3 H(+). It functions in the pathway cofactor biosynthesis; biotin biosynthesis; biotin from 7,8-diaminononanoate: step 1/2. Catalyzes a mechanistically unusual reaction, the ATP-dependent insertion of CO2 between the N7 and N8 nitrogen atoms of 7,8-diaminopelargonic acid (DAPA, also called 7,8-diammoniononanoate) to form a ureido ring. The protein is ATP-dependent dethiobiotin synthetase BioD of Vesicomyosocius okutanii subsp. Calyptogena okutanii (strain HA).